Reading from the N-terminus, the 1562-residue chain is NAC-alpha domain-containing protein 1 (1562 aa).

A compositionally biased stretch (low complexity) spans 1–13; the sequence is MPGEAARAELLLP. Disordered stretches follow at residues 1–24, 56–110, 131–226, 249–288, 327–365, 381–458, 503–941, and 953–1423; these read MPGE…RTDL, FLPS…TEAP, SPRA…ADGD, SGWG…SSSW, TPLS…LQSL, RDDT…GAYL, TPQA…EPLA, and GCAP…AMSK. Residues 195 to 208 show a composition bias toward basic and acidic residues; sequence GDARDSEAELRDEL. Low complexity predominate over residues 275–287; the sequence is SSESSLSADSSSS. The span at 331 to 340 shows a compositional bias: acidic residues; the sequence is PEEEEEEAVA. A compositionally biased stretch (low complexity) spans 385-397; sequence SAASSDSDSASYA. Composition is skewed to polar residues over residues 449 to 458 and 550 to 564; these read PQTSDRGAYL and QEET…SPQN. The span at 992 to 1007 shows a compositional bias: low complexity; that stretch reads PAALDQVQQDDPQPAA. Basic and acidic residues predominate over residues 1048 to 1074; it reads PGREACLEARAHTGDGAKPDSPQKETL. Ser-1068 carries the post-translational modification Phosphoserine. Composition is skewed to low complexity over residues 1172 to 1182 and 1231 to 1241; these read APTSAPTSQQP and APGTLAGAALP. Positions 1254–1264 are enriched in acidic residues; it reads PQEDSVEDEEP. Composition is skewed to low complexity over residues 1265-1284, 1298-1308, and 1335-1344; these read PGSL…AAAV, SLSPHSPLLSP, and QSPAGPQGLS. The segment covering 1348–1357 has biased composition (acidic residues); it reads QQEDEDSLEE. Residue Ser-1354 is modified to Phosphoserine. Residues 1411-1476 enclose the NAC-A/B domain; the sequence is SRSEKKARKA…AKIEDLSQQV (66 aa).

Belongs to the NAC-alpha family.

It is found in the cytoplasm. Its subcellular location is the nucleus. Its function is as follows. May prevent inappropriate targeting of non-secretory polypeptides to the endoplasmic reticulum (ER). May bind to nascent polypeptide chains as they emerge from the ribosome and block their interaction with the signal recognition particle (SRP), which normally targets nascent secretory peptides to the ER. May also reduce the inherent affinity of ribosomes for protein translocation sites in the ER membrane (M sites). This is NAC-alpha domain-containing protein 1 (NACAD) from Homo sapiens (Human).